Here is a 232-residue protein sequence, read N- to C-terminus: MKKQQFIDMQEQGTSTIPNLLLTHYKQLGLNETELILLLKIKMHLEKGSYFPTPNQLQEGMSISVEECTNRLRMFIQKGFLFIEECEDQNGIKFEKYSLQPLWGKLYEYIQLAQNQTQERKAEGEQKSLYTIFEEEFARPLSPLECETLAIWQDQDQHDAQLIKHALKEAVLSGKLSFRYIDRILFEWKKNGLKTVEQAKIHSQKFRRVQAKQNEPQKEYKRQVPFYNWLEQ.

The interval methionine 1–serine 98 is N-terminal domain. The segment at methionine 1–glutamine 116 is DDBH1. Residues leucine 99–lysine 205 form a C-terminal domain region. The tract at residues threonine 131 to lysine 200 is DDBH2. Positions phenylalanine 206 to glutamine 232 are C-terminal tail.

It belongs to the DnaB/DnaD family. In terms of assembly, the DNA replisome assembles sequentially on oriC in this order; DnaA, DnaD, DnaB, DnaI-DnaC helicase. Homodimer. Homotetramer. Oligomerization in vitro is concentration dependent. Part of the replication restart primosome which assembles in this order; PriA, DnaD then DnaB. The preferred DNA substrate mimics an arrested DNA replication fork with unreplicated lagging strand. Interacts with DnaA, DnaB and PriA. Interaction with DnaB requires DnaD to dimerize.

It is found in the cytoplasm. Its activity is regulated as follows. Recruitment to oriC requires DnaA but not DnaB, DnaC or DnaI and is blocked by SirA. Functionally, required to load replicative helicase DnaC onto replication forks. Binds to a DnaD recognition element (DRE) which has pairs of 5'-TnnT-3' motifs; there is a strong DRE at oriC opposite the DnaA-trios recognized by DnaA. During DNA replication from the origin of replication (oriC) in the DNA replisome, DnaD is required after DnaA, before DnaB and subsequent helicase DnaC loading. A component of the replication restart primosome, which reloads the replicative helicase on sites other than oriC. DnaB, DnaD and DnaI may also be required for a PriA-independent pathway of replication fork restart. DnaB and DnaD work together to allow DnaB access to single-stranded (ss)DNA. Has DNA remodeling activity that converts supercoiled plasmid into an open circular form; DnaD forms scaffolds inside the plasmid DNA. Plasmid relaxation incorporates both wrapping around the DnaD protein scaffold and simultaneous untwisting, no nicking of the DNA is seen. Also converts linear DNA into an open circular form. Disrupts a replicative helicase-DnaI complex. Inhibits the ability of DnaA-ATP to form a helix on DNA; does not disassemble preformed helices in vitro. Binds ssDNA, and replication fork-like substrates, supercoiled plasmid, but not stably to short double-stranded (ds)DNA. DnaD stimulates DnaB DNA-binding activities. DnaB and DnaD are required to load helicase on the repN plasmid origin of replication (oriN). Causes a severe growth defect upon overexpression even in an oriC-independent strain. This chain is Replicative helicase loading/DNA remodeling protein DnaD, found in Bacillus subtilis (strain 168).